A 327-amino-acid polypeptide reads, in one-letter code: Undecaprenyl-phosphate 4-deoxy-4-formamido-L-arabinose transferase (327 aa).

2 consecutive transmembrane segments (helical) span residues 235-255 (LLSL…VLLV) and 270-290 (VFTL…GMGL).

This sequence belongs to the glycosyltransferase 2 family.

Its subcellular location is the cell inner membrane. It catalyses the reaction UDP-4-deoxy-4-formamido-beta-L-arabinose + di-trans,octa-cis-undecaprenyl phosphate = 4-deoxy-4-formamido-alpha-L-arabinopyranosyl di-trans,octa-cis-undecaprenyl phosphate + UDP. It functions in the pathway glycolipid biosynthesis; 4-amino-4-deoxy-alpha-L-arabinose undecaprenyl phosphate biosynthesis; 4-amino-4-deoxy-alpha-L-arabinose undecaprenyl phosphate from UDP-4-deoxy-4-formamido-beta-L-arabinose and undecaprenyl phosphate: step 1/2. The protein operates within bacterial outer membrane biogenesis; lipopolysaccharide biosynthesis. Its function is as follows. Catalyzes the transfer of 4-deoxy-4-formamido-L-arabinose from UDP to undecaprenyl phosphate. The modified arabinose is attached to lipid A and is required for resistance to polymyxin and cationic antimicrobial peptides. The protein is Undecaprenyl-phosphate 4-deoxy-4-formamido-L-arabinose transferase of Yersinia pestis bv. Antiqua (strain Antiqua).